The chain runs to 573 residues: 2-succinyl-5-enolpyruvyl-6-hydroxy-3-cyclohexene-1-carboxylate synthase (573 aa).

Belongs to the TPP enzyme family. MenD subfamily. Homodimer. Requires Mg(2+) as cofactor. Mn(2+) is required as a cofactor. The cofactor is thiamine diphosphate.

The catalysed reaction is isochorismate + 2-oxoglutarate + H(+) = 5-enolpyruvoyl-6-hydroxy-2-succinyl-cyclohex-3-ene-1-carboxylate + CO2. It functions in the pathway quinol/quinone metabolism; 1,4-dihydroxy-2-naphthoate biosynthesis; 1,4-dihydroxy-2-naphthoate from chorismate: step 2/7. It participates in quinol/quinone metabolism; menaquinone biosynthesis. Catalyzes the thiamine diphosphate-dependent decarboxylation of 2-oxoglutarate and the subsequent addition of the resulting succinic semialdehyde-thiamine pyrophosphate anion to isochorismate to yield 2-succinyl-5-enolpyruvyl-6-hydroxy-3-cyclohexene-1-carboxylate (SEPHCHC). The chain is 2-succinyl-5-enolpyruvyl-6-hydroxy-3-cyclohexene-1-carboxylate synthase from Shewanella sp. (strain MR-4).